A 251-amino-acid polypeptide reads, in one-letter code: 5-oxoprolinase subunit A 2 (251 aa).

The protein belongs to the LamB/PxpA family. In terms of assembly, forms a complex composed of PxpA, PxpB and PxpC.

It carries out the reaction 5-oxo-L-proline + ATP + 2 H2O = L-glutamate + ADP + phosphate + H(+). In terms of biological role, catalyzes the cleavage of 5-oxoproline to form L-glutamate coupled to the hydrolysis of ATP to ADP and inorganic phosphate. This Pseudomonas syringae pv. tomato (strain ATCC BAA-871 / DC3000) protein is 5-oxoprolinase subunit A 2.